The primary structure comprises 631 residues: Putative meiotic phospholipase SPO1 (631 aa).

A signal peptide spans 1–17 (MQKLLFVFSVLLTVVLA). The tract at residues 24 to 67 (QCPSSPLIREAKHELCPEETLYLKKKKIKTKNKLIQFLKSLTEA) is required for lipid-binding and function in meiosis. The region spanning 24 to 631 (QCPSSPLIRE…LQCFKDYCYS (608 aa)) is the PLA2c domain. 3 N-linked (GlcNAc...) asparagine glycosylation sites follow: N233, N293, and N303. A helical transmembrane segment spans residues 376 to 396 (FITATSSSIFNNVLIFIWNLA). N-linked (GlcNAc...) asparagine glycans are attached at residues N500, N536, N560, N563, and N572.

Belongs to the lysophospholipase family. Interacts with SPO23. Post-translationally, glycosylated.

The protein localises to the endoplasmic reticulum membrane. It localises to the nucleus membrane. Regulates spindle pole duplication in meiosis I, but not in mitosis. Required for meiosis I, meiosis II chromosome segregation and spore formation. Binds phosphatidylinositol (4)P mono- and polyphosphates. This Saccharomyces cerevisiae (strain ATCC 204508 / S288c) (Baker's yeast) protein is Putative meiotic phospholipase SPO1 (SPO1).